Consider the following 161-residue polypeptide: Long arms of the bivalent protein 1 (161 aa).

Residues 72 to 75 (KVIW) carry the PP1 binding motif motif. The disordered stretch occupies residues 85–161 (GTMFEDFKED…SDKTMCSGQS (77 aa)). A compositionally biased stretch (polar residues) spans 97–115 (QESVSSISNNEANWGSSVN). The span at 120–129 (NYEKMQKEET) shows a compositional bias: basic and acidic residues. Over residues 130–151 (FDPYDSDSDTSEDSDFDEDFED) the composition is skewed to acidic residues.

As to quaternary structure, interacts with gsp-1 and gsp-2; the interaction is direct.

The protein resides in the chromosome. The protein localises to the nucleus. In terms of biological role, involved in sister chromatid cohesion during mitosis and meiosis. In association with the gsp-2 phosphatase, it both restricts the localization and antagonizes the function of the air-2 kinase during meiosis I and mitosis to promote chromatid cohesion and spindle attachment. This in turn, drives germ cell immortality. Furthermore, may play a role in ensuring the timely assembly of the synaptonemal complex during prophase I of meiosis. The protein is Long arms of the bivalent protein 1 of Caenorhabditis elegans.